The primary structure comprises 705 residues: Pentatricopeptide repeat-containing protein At1g09410, mitochondrial (705 aa).

The transit peptide at Met1–Tyr11 directs the protein to the mitochondrion. 15 PPR repeats span residues Pro16–Lys46, Ser47–Arg77, Asn78–Ser112, Trp113–Lys139, Asn140–Lys170, Asp171–Thr205, Trp206–Lys232, Thr233–Ala267, Cys268–Arg294, Asn295–Pro329, Thr330–Val364, Asp365–Lys395, Asp396–Lys430, Asn432–Val462, and Ile468–Glu498. Residues Val503–Glu578 are type E motif. The segment at Asn579–Arg610 is type E(+) motif. The segment at Glu611–Trp705 is type DYW motif.

It belongs to the PPR family. PCMP-H subfamily.

Its subcellular location is the mitochondrion. The protein is Pentatricopeptide repeat-containing protein At1g09410, mitochondrial (PCMP-H18) of Arabidopsis thaliana (Mouse-ear cress).